The primary structure comprises 466 residues: Vimentin (466 aa).

2 stretches are compositionally biased toward low complexity: residues 1 to 13 (MSTRSVSSSSYRR) and 20 to 33 (TSSRPSSNRSYVTT). The tract at residues 1-33 (MSTRSVSSSSYRRMFGGSGTSSRPSSNRSYVTT) is disordered. Serine 2 is subject to N-acetylserine. Residues 2-95 (STRSVSSSSY…FSLADAINTE (94 aa)) are head. Serine 5 carries the post-translational modification Phosphoserine. A Phosphoserine; by PKA and PKC; alternate modification is found at serine 7. Serine 7 carries an O-linked (GlcNAc) serine; alternate glycan. At serine 8 the chain carries Phosphoserine. Phosphoserine; by PKC occurs at positions 9 and 10. Threonine 20 carries the post-translational modification Phosphothreonine. Residues serine 25 and serine 26 each carry the phosphoserine modification. Residue threonine 33 is glycosylated (O-linked (GlcNAc) threonine). A glycan (O-linked (GlcNAc) serine; alternate) is linked at serine 34. Serine 34 is modified (phosphoserine; by PKC; alternate). Serine 39 bears the Phosphoserine; by CaMK2, PKA, PKC and ROCK2 mark. Phosphoserine; by PKC is present on serine 42. Phosphoserine; by PKA is present on serine 47. Serine 49 and serine 51 each carry phosphoserine. Phosphotyrosine is present on tyrosine 53. A phosphoserine mark is found at serine 55 and serine 56. Residue tyrosine 61 is modified to Phosphotyrosine. The residue at position 66 (serine 66) is a Phosphoserine; by PKA and PKC. Serine 72 is subject to Phosphoserine; by AURKB and ROCK2. Phosphoserine occurs at positions 73, 83, and 87. Positions 96–131 (FKNTRTNEKVELQELNDRFANYIDKVRFLEQQNKIL) are coil 1A. Residues 96-131 (FKNTRTNEKVELQELNDRFANYIDKVRFLEQQNKIL) adopt a coiled-coil conformation. The IF rod domain occupies 103 to 411 (EKVELQELND…KLLEGEESRI (309 aa)). A Glycyl lysine isopeptide (Lys-Gly) (interchain with G-Cter in SUMO2) cross-link involves residue lysine 104. The residue at position 117 (tyrosine 117) is a Phosphotyrosine. N6-acetyllysine; alternate is present on residues lysine 120, lysine 129, and lysine 139. N6-succinyllysine; alternate is present on residues lysine 120 and lysine 129. Residues lysine 120, lysine 129, and lysine 139 each participate in a glycyl lysine isopeptide (Lys-Gly) (interchain with G-Cter in SUMO2); alternate cross-link. The interval 132-153 (LAELEQLKGQGKSRLGDLYEEE) is linker 1. Position 144 is a phosphoserine (serine 144). A coiled-coil region spans residues 154 to 245 (MRELRRQVDQ…KLHDEEIQEL (92 aa)). Positions 154 to 245 (MRELRRQVDQ…KLHDEEIQEL (92 aa)) are coil 1B. An N6-acetyllysine modification is found at lysine 168. Lysine 188 bears the N6-acetyllysine; alternate mark. An N6-succinyllysine; alternate modification is found at lysine 188. Serine 214 is subject to Phosphoserine. The residue at position 223 (lysine 223) is an N6-acetyllysine; alternate. Residue lysine 223 forms a Glycyl lysine isopeptide (Lys-Gly) (interchain with G-Cter in SUMO2); alternate linkage. Serine 226 carries the phosphoserine modification. Lysine 235 bears the N6-acetyllysine mark. The segment at 246–268 (QAQIQEQHVQIDVDVSKPDLTAA) is linker 12. Lysine 262 is covalently cross-linked (Glycyl lysine isopeptide (Lys-Gly) (interchain with G-Cter in SUMO2)). The segment at 269–407 (LRDVRQQYES…ATYRKLLEGE (139 aa)) is coil 2. N6-acetyllysine; alternate is present on lysine 294. Lysine 294 carries the post-translational modification N6-succinyllysine; alternate. Lysine 294 is covalently cross-linked (Glycyl lysine isopeptide (Lys-Gly) (interchain with G-Cter in SUMO2); alternate). Serine 299 is subject to Phosphoserine. Residues 303-407 (NRNNDALRQA…ATYRKLLEGE (105 aa)) are a coiled coil. Residue lysine 313 forms a Glycyl lysine isopeptide (Lys-Gly) (interchain with G-Cter in SUMO2) linkage. Serine 325 is subject to Phosphoserine. Residues 326–329 (LTCE) carry the [IL]-x-C-x-x-[DE] motif motif. Lysine 373 is modified (N6-acetyllysine; alternate). Lysine 373 is covalently cross-linked (Glycyl lysine isopeptide (Lys-Gly) (interchain with G-Cter in SUMO2); alternate). Residues 408–466 (ESRISLPLPNFSSLNLRETNLESLPLVDTHSKRTLLIKTVETRDGQVINETSQHHDDLE) form a tail region. Phosphoserine is present on residues serine 409, serine 412, serine 419, and serine 420. Threonine 426 is modified (phosphothreonine). At serine 430 the chain carries Phosphoserine. Threonine 436 is modified (phosphothreonine). Serine 438 bears the Phosphoserine mark. Lysine 439 participates in a covalent cross-link: Glycyl lysine isopeptide (Lys-Gly) (interchain with G-Cter in SUMO2). N6-acetyllysine; alternate is present on lysine 445. Lysine 445 is subject to N6-succinyllysine; alternate. A Glycyl lysine isopeptide (Lys-Gly) (interchain with G-Cter in SUMO2); alternate cross-link involves residue lysine 445. Lysine 445 participates in a covalent cross-link: Glycyl lysine isopeptide (Lys-Gly) (interchain with G-Cter in SUMO1); alternate. Residues threonine 446 and threonine 458 each carry the phosphothreonine modification. Position 459 is a phosphoserine (serine 459).

Belongs to the intermediate filament family. As to quaternary structure, homomer assembled from elementary dimers. Identified in complexes that contain VIM, EZR, AHNAK, BFSP1, BFSP2, ANK2, PLEC, PRX and spectrin. Interacts with BCAS3. Interacts with LGSN. Interacts with SYNM. Interacts (via rod region) with PLEC (via CH 1 domain). Interacts with STK33. Interacts with LARP6. Interacts with RAB8B. Interacts with TOR1A; the interaction associates TOR1A with the cytoskeleton. Interacts with TOR1AIP1. Interacts with TOR1AIP1. Interacts with DIAPH1. Interacts with EPPK1; interaction is dependent of higher-order structure of intermediate filament. Interacts with the non-receptor tyrosine kinase SRMS; the interaction leads to phosphorylation of VIM. Interacts with NOD2. Interacts (via head region) with CORO1C. Interacts with HDGF. Interacts with PRKCE (via phorbol-ester/DAG-type 2 domain). Interacts with BFSP2. Interacts with PPL. Interacts with PKP1 and PKP2. Interacts with SCRIB (via PDZ domains); the interaction protects SCRIB from proteasomal degradation and facilitates SCRIB localization to intermediate filaments, the interaction is reduced by cell contact inhibition. Post-translationally, one of the most prominent phosphoproteins in various cells of mesenchymal origin. Phosphorylation is enhanced during cell division, at which time vimentin filaments are significantly reorganized. Phosphorylation by PKN1 inhibits the formation of filaments. Filament disassembly during mitosis is promoted by phosphorylation at Ser-55 as well as by nestin. Phosphorylated at Ser-56 by CDK5 during neutrophil secretion in the cytoplasm. Phosphorylated by STK33. Phosphorylated on tyrosine residues by SRMS. S-nitrosylation is induced by interferon-gamma and oxidatively-modified low-densitity lipoprotein (LDL(ox)) possibly implicating the iNOS-S100A8/9 transnitrosylase complex.

It localises to the cytoplasm. Its subcellular location is the cytoskeleton. It is found in the nucleus matrix. The protein resides in the cell membrane. Its function is as follows. Vimentins are class-III intermediate filaments found in various non-epithelial cells, especially mesenchymal cells. Vimentin is attached to the nucleus, endoplasmic reticulum, and mitochondria, either laterally or terminally. Plays a role in cell directional movement, orientation, cell sheet organization and Golgi complex polarization at the cell migration front. Protects SCRIB from proteasomal degradation and facilitates its localization to intermediate filaments in a cell contact-mediated manner. In terms of biological role, involved with LARP6 in the stabilization of type I collagen mRNAs for CO1A1 and CO1A2. In Rattus norvegicus (Rat), this protein is Vimentin.